Consider the following 93-residue polypeptide: CRISPR-associated endoribonuclease Cas2 2 (93 aa).

A Mg(2+)-binding site is contributed by Asp9.

This sequence belongs to the CRISPR-associated endoribonuclease Cas2 protein family. In terms of assembly, homodimer, forms a heterotetramer with a Cas1 homodimer. Requires Mg(2+) as cofactor.

Functionally, CRISPR (clustered regularly interspaced short palindromic repeat), is an adaptive immune system that provides protection against mobile genetic elements (viruses, transposable elements and conjugative plasmids). CRISPR clusters contain sequences complementary to antecedent mobile elements and target invading nucleic acids. CRISPR clusters are transcribed and processed into CRISPR RNA (crRNA). Functions as a ssRNA-specific endoribonuclease. Involved in the integration of spacer DNA into the CRISPR cassette. This is CRISPR-associated endoribonuclease Cas2 2 from Synechocystis sp. (strain ATCC 27184 / PCC 6803 / Kazusa).